A 376-amino-acid chain; its full sequence is Dual-specificity RNA methyltransferase RlmN (376 aa).

Residue glutamate 96 is the Proton acceptor of the active site. Residues 102 to 341 (DEDRATLCVS…VVVRKTRGDD (240 aa)) form the Radical SAM core domain. Cysteine 109 and cysteine 346 are disulfide-bonded. [4Fe-4S] cluster is bound by residues cysteine 116, cysteine 120, and cysteine 123. S-adenosyl-L-methionine is bound by residues 170–171 (GE), serine 202, 224–226 (SLH), and asparagine 303. Cysteine 346 (S-methylcysteine intermediate) is an active-site residue.

The protein belongs to the radical SAM superfamily. RlmN family. [4Fe-4S] cluster is required as a cofactor.

It is found in the cytoplasm. It carries out the reaction adenosine(2503) in 23S rRNA + 2 reduced [2Fe-2S]-[ferredoxin] + 2 S-adenosyl-L-methionine = 2-methyladenosine(2503) in 23S rRNA + 5'-deoxyadenosine + L-methionine + 2 oxidized [2Fe-2S]-[ferredoxin] + S-adenosyl-L-homocysteine. The catalysed reaction is adenosine(37) in tRNA + 2 reduced [2Fe-2S]-[ferredoxin] + 2 S-adenosyl-L-methionine = 2-methyladenosine(37) in tRNA + 5'-deoxyadenosine + L-methionine + 2 oxidized [2Fe-2S]-[ferredoxin] + S-adenosyl-L-homocysteine. Its function is as follows. Specifically methylates position 2 of adenine 2503 in 23S rRNA and position 2 of adenine 37 in tRNAs. m2A2503 modification seems to play a crucial role in the proofreading step occurring at the peptidyl transferase center and thus would serve to optimize ribosomal fidelity. This chain is Dual-specificity RNA methyltransferase RlmN, found in Pseudoalteromonas atlantica (strain T6c / ATCC BAA-1087).